The sequence spans 181 residues: MTEYVVLVNEQGDAIGTMEKLEAHEKGLLHLAFSVLLYRETDLGKEFLLQKRAECKYHSKNKWSNTCCSHPRVNENVEAAGTRRLNEEIGITGVLPEQFVNLGWFIYQAELENGLSEHEQDYILIANTPDVSFILNPEEVSDIQWWSEADIEKELKANPDTFSVWFPTVYKKVLTHLHQAN.

Residues His-24 and His-30 each coordinate Mn(2+). The Nudix hydrolase domain occupies 28–168; it reads LLHLAFSVLL…PDTFSVWFPT (141 aa). Cys-68 is an active-site residue. His-70 provides a ligand contact to Mn(2+). Glu-88 contributes to the Mg(2+) binding site. Glu-117 and Glu-119 together coordinate Mn(2+). Glu-119 is a catalytic residue.

This sequence belongs to the IPP isomerase type 1 family. Mg(2+) is required as a cofactor. Mn(2+) serves as cofactor.

Its subcellular location is the cytoplasm. The catalysed reaction is isopentenyl diphosphate = dimethylallyl diphosphate. It participates in isoprenoid biosynthesis; dimethylallyl diphosphate biosynthesis; dimethylallyl diphosphate from isopentenyl diphosphate: step 1/1. In terms of biological role, catalyzes the 1,3-allylic rearrangement of the homoallylic substrate isopentenyl (IPP) to its highly electrophilic allylic isomer, dimethylallyl diphosphate (DMAPP). The sequence is that of Isopentenyl-diphosphate Delta-isomerase from Aliivibrio fischeri (strain MJ11) (Vibrio fischeri).